The primary structure comprises 116 residues: Large ribosomal subunit protein uL18 (116 aa).

Belongs to the universal ribosomal protein uL18 family. Part of the 50S ribosomal subunit; part of the 5S rRNA/L5/L18/L25 subcomplex. Contacts the 5S and 23S rRNAs.

In terms of biological role, this is one of the proteins that bind and probably mediate the attachment of the 5S RNA into the large ribosomal subunit, where it forms part of the central protuberance. The protein is Large ribosomal subunit protein uL18 of Marinomonas sp. (strain MWYL1).